The following is a 56-amino-acid chain: Large ribosomal subunit protein bL32c (56 aa).

This sequence belongs to the bacterial ribosomal protein bL32 family.

It localises to the plastid. It is found in the chloroplast. This is Large ribosomal subunit protein bL32c from Platanus occidentalis (Sycamore).